A 1358-amino-acid chain; its full sequence is Retrotransposon-like protein 1 (1358 aa).

2 disordered regions span residues 1-159 and 563-616; these read MIEP…TEHS and ADVF…TAPW. Over residues 19–30 the composition is skewed to low complexity; the sequence is SSKQMESSEGSS. Over residues 65 to 79 the composition is skewed to acidic residues; it reads EMEELPTDLLQDMEE. The segment covering 131-149 has biased composition (basic and acidic residues); that stretch reads AREEQEAHTDLKESGREET. Residues 583 to 592 show a composition bias toward acidic residues; it reads GSDDLSESEP. 2 helical membrane passes run 1083-1099 and 1126-1146; these read LLYWKNTLALAAILVLL and LILDSSLIAGSSITTAITQLL. 2 disordered regions span residues 1250–1283 and 1338–1358; these read DGLQDTSQDKQDNDVQEAPPSHTAATHPPRPRHL and QPREQARLEELPDEDEDANLD. The segment covering 1267–1276 has biased composition (low complexity); the sequence is APPSHTAATH. Basic and acidic residues predominate over residues 1338-1347; it reads QPREQARLEE. Acidic residues predominate over residues 1348-1358; sequence LPDEDEDANLD.

Its subcellular location is the membrane. Its function is as follows. Plays an essential role in capillaries endothelial cells for the maintenance of feto-maternal interface and for development of the placenta. This chain is Retrotransposon-like protein 1 (RTL1), found in Homo sapiens (Human).